The primary structure comprises 299 residues: NAD kinase 1 (299 aa).

D62 acts as the Proton acceptor in catalysis. NAD(+)-binding positions include 62–63, K67, 143–144, K173, and D175; these read DG and ND.

The protein belongs to the NAD kinase family. Requires a divalent metal cation as cofactor.

It is found in the cytoplasm. It catalyses the reaction NAD(+) + ATP = ADP + NADP(+) + H(+). Involved in the regulation of the intracellular balance of NAD and NADP, and is a key enzyme in the biosynthesis of NADP. Catalyzes specifically the phosphorylation on 2'-hydroxyl of the adenosine moiety of NAD to yield NADP. This Prochlorococcus marinus subsp. pastoris (strain CCMP1986 / NIES-2087 / MED4) protein is NAD kinase 1.